We begin with the raw amino-acid sequence, 151 residues long: Myosin light polypeptide 6 (151 aa).

The residue at position 2 (Cys2) is an N-acetylcysteine. EF-hand domains follow at residues 7–42 (EQTA…LGQN), 84–119 (GCFE…LGEK), and 119–151 (KMTE…VLSG).

In terms of assembly, myosin is a hexamer of 2 heavy chains and 4 light chains.

Its function is as follows. Regulatory light chain of myosin. Does not bind calcium. The polypeptide is Myosin light polypeptide 6 (MYL6) (Gallus gallus (Chicken)).